A 642-amino-acid polypeptide reads, in one-letter code: Dihydrolipoyllysine-residue acetyltransferase component of pyruvate dehydrogenase complex, mitochondrial (642 aa).

A mitochondrion-targeting transit peptide spans 1 to 85; the sequence is MWRVCARRAR…LLGSPSRRSY (85 aa). A disordered region spans residues 80–99; that stretch reads PSRRSYSLPPHQKVPLPSLS. 2 Lipoyl-binding domains span residues 90-166 and 217-293; these read HQKV…CITV and HMQI…CIIV. Ser-99 is subject to Phosphoserine. An N6-lipoyllysine mark is found at Lys-131 and Lys-258. Residues 313-346 are disordered; the sequence is LKPQAAPPAPPPVAAVPPTPQPVAPTPSAAPAGP. Residues 317–337 are compositionally biased toward pro residues; sequence AAPPAPPPVAAVPPTPQPVAP. Residues 351 to 388 form the Peripheral subunit-binding (PSBD) domain; sequence FVSPLAKKLAAEKGIDLTQVKGTGPEGRIIKKDIDSFV. CoA is bound at residue Arg-456. Lys-461 carries the post-translational modification N6-acetyllysine. Lys-468 is modified (N6-succinyllysine). Ser-470 lines the CoA pocket. Lys-542 carries the post-translational modification N6-succinyllysine. CoA-binding residues include Ser-561, Asn-562, and Gly-586. Catalysis depends on residues His-615 and Asp-619.

This sequence belongs to the 2-oxoacid dehydrogenase family. In terms of assembly, part of the pyruvate dehydrogenase complex (PDHc) that is a multi-enzyme complex composed of multiple copies of three enzymes, pyruvate dehydrogenase (subunits PDH1A and PDHB, E1 component), dihydrolipoamide acetyltransferase (DLAT, E2 component), and dihydrolipoamide dehydrogenase (DLD, E3 component) to which is added an additional protein the E3-binding protein (PDHX, E3BP). In terms of structural architecture, the E2 and E3BP components assemble into a 60meric central core with icosahedral symmetry. The central core is decorated with E1 and E3 proteins. Currently, two alternative models for the E2:E3BP stoichiometry are considered as being either 48:12 (E2(48)-E3BP(12)) or 40:20 (E2(40)-E3BP(20)). Interacts with PDK2 and PDK3. Interacts with SIRT4. Interacts with PDHB. (R)-lipoate is required as a cofactor. Delipoylated at Lys-131 and Lys-258 by SIRT4, delipoylation decreases the PHD complex activity.

The protein resides in the mitochondrion matrix. The catalysed reaction is N(6)-[(R)-dihydrolipoyl]-L-lysyl-[protein] + acetyl-CoA = N(6)-[(R)-S(8)-acetyldihydrolipoyl]-L-lysyl-[protein] + CoA. Functionally, as part of the pyruvate dehydrogenase complex, catalyzes the transfers of an acetyl group to a lipoic acid moiety. The pyruvate dehydrogenase complex, catalyzes the overall conversion of pyruvate to acetyl-CoA and CO(2), and thereby links cytoplasmic glycolysis and the mitochondrial tricarboxylic acid (TCA) cycle. The protein is Dihydrolipoyllysine-residue acetyltransferase component of pyruvate dehydrogenase complex, mitochondrial of Mus musculus (Mouse).